The primary structure comprises 187 residues: UPF0301 protein YPTS_3341 (187 aa).

This sequence belongs to the UPF0301 (AlgH) family.

The polypeptide is UPF0301 protein YPTS_3341 (Yersinia pseudotuberculosis serotype IB (strain PB1/+)).